Here is a 209-residue protein sequence, read N- to C-terminus: A-type ATP synthase subunit D (209 aa).

This sequence belongs to the V-ATPase D subunit family. In terms of assembly, has multiple subunits with at least A(3), B(3), C, D, E, F, H, I and proteolipid K(x).

The protein localises to the cell membrane. Functionally, component of the A-type ATP synthase that produces ATP from ADP in the presence of a proton gradient across the membrane. In Methanoregula boonei (strain DSM 21154 / JCM 14090 / 6A8), this protein is A-type ATP synthase subunit D.